Reading from the N-terminus, the 123-residue chain is Snaclec GPIB-binding protein subunit beta (123 aa).

3 cysteine pairs are disulfide-bonded: C2/C13, C30/C119, and C96/C111. The C-type lectin domain occupies 9 to 120; that stretch reads YGGHCYKLFK…CTRLQYFVCE (112 aa).

It belongs to the snaclec family. Heterodimer of subunits alpha and beta; disulfide-linked. As to expression, expressed by the venom gland.

The protein localises to the secreted. Binds to platelet GPIb (subunit alpha) (GP1BA) and functions as a receptor blocker for vWF binding to GPIb. The platelet GPIb-binding site resides on the GPIB-BP subunit beta and not on the alpha subunit. At a final concentration of 104 nM totally abolishes vWF-dependent shear-induced platelet aggregation (SIPA) at a high shear stress, but had no effect on SIPA at a low shear stress. In Bothrops jararaca (Jararaca), this protein is Snaclec GPIB-binding protein subunit beta.